Reading from the N-terminus, the 158-residue chain is 3-dehydroquinate dehydratase (158 aa).

Y24 (proton acceptor) is an active-site residue. Positions 75, 81, and 88 each coordinate substrate. The active-site Proton donor is H101. Substrate is bound by residues 102 to 103 (LS) and R112.

This sequence belongs to the type-II 3-dehydroquinase family. In terms of assembly, homododecamer.

It carries out the reaction 3-dehydroquinate = 3-dehydroshikimate + H2O. Its pathway is metabolic intermediate biosynthesis; chorismate biosynthesis; chorismate from D-erythrose 4-phosphate and phosphoenolpyruvate: step 3/7. Functionally, catalyzes a trans-dehydration via an enolate intermediate. This chain is 3-dehydroquinate dehydratase, found in Bartonella bacilliformis (strain ATCC 35685 / KC583 / Herrer 020/F12,63).